The chain runs to 137 residues: uncharacterized protein (137 aa).

The 78-residue stretch at valine 58–asparagine 135 folds into the Ubiquitin-like domain.

The protein localises to the cytoplasm. Its subcellular location is the nucleus. This is an uncharacterized protein from Schizosaccharomyces pombe (strain 972 / ATCC 24843) (Fission yeast).